Reading from the N-terminus, the 206-residue chain is MHLSEGVLHTPILLAGAVLAVAGIAVGLRRLESERLPLTALFAAAFFVAGTIHVPVGIGSVHLILNGMAGLFLGWAVFPAFLIALLLQVIFFSFGGFAVLGVNLCVMATPAVIAHYLFRSRLQPQMALKDRLLVGIGAGVIGVGGAGALASFVLMLDGGKSYLNLVWLLLVSHIPVFILDSIISVGVITLLGKMYPEVMNRTENFS.

The next 6 membrane-spanning stretches (helical) occupy residues 6–26, 38–58, 72–92, 94–114, 136–156, and 165–185; these read GVLHTPILLAGAVLAVAGIAV, LTALFAAAFFVAGTIHVPVGI, FLGWAVFPAFLIALLLQVIFF, FGGFAVLGVNLCVMATPAVIA, IGAGVIGVGGAGALASFVLML, and LVWLLLVSHIPVFILDSIISV.

The protein belongs to the CbiM family.

Its subcellular location is the cell membrane. Its function is as follows. May be involved in metal transport. In Haemophilus influenzae (strain ATCC 51907 / DSM 11121 / KW20 / Rd), this protein is Putative metal transport protein HI_1621.